A 294-amino-acid chain; its full sequence is 33 kDa chaperonin (294 aa).

2 disulfides stabilise this stretch: cysteine 236-cysteine 238 and cysteine 269-cysteine 272.

It belongs to the HSP33 family. Post-translationally, under oxidizing conditions two disulfide bonds are formed involving the reactive cysteines. Under reducing conditions zinc is bound to the reactive cysteines and the protein is inactive.

It localises to the cytoplasm. Its function is as follows. Redox regulated molecular chaperone. Protects both thermally unfolding and oxidatively damaged proteins from irreversible aggregation. Plays an important role in the bacterial defense system toward oxidative stress. This is 33 kDa chaperonin from Desulfotalea psychrophila (strain LSv54 / DSM 12343).